The following is a 390-amino-acid chain: MPPRSLPNLSLPTEASESELEPEVWENDFLPDSDGTTAELVIRCVIPSLYLIIISVGLLGNIMLVKIFLTNSTMRSVPNIFISNLAAGDLLLLLTCVPVDASRYFFDEWVFGKLGCKLIPAIQLTSVGVSVFTLTALSADRYRAIVNPMDMQTSGVVLWTSLKAVGIWVVSVLLAVPEAVFSEVARIGSSDNSSFTACIPYPQTDELHPKIHSVLIFLVYFLIPLVIISIYYYHIAKTLIRSAHNLPGEYNEHTKKQMETRKRLAKIVLVFVGCFVFCWFPNHILYLYRSFNYKEIDPSLGHMIVTLVARVLSFSNSCVNPFALYLLSESFRKHFNSQLCCGQKSYPERSTSYLLSSSAVRMTSLKSNAKNVVTNSVLLNGHSTKQEIAL.

The tract at residues 1–20 (MPPRSLPNLSLPTEASESEL) is disordered. Topologically, residues 1–41 (MPPRSLPNLSLPTEASESELEPEVWENDFLPDSDGTTAELV) are extracellular. Asn8 is a glycosylation site (N-linked (GlcNAc...) asparagine). The chain crosses the membrane as a helical span at residues 42-65 (IRCVIPSLYLIIISVGLLGNIMLV). At 66–79 (KIFLTNSTMRSVPN) the chain is on the cytoplasmic side. Residues 80–99 (IFISNLAAGDLLLLLTCVPV) form a helical membrane-spanning segment. The Extracellular portion of the chain corresponds to 100 to 117 (DASRYFFDEWVFGKLGCK). Residues Cys116 and Cys198 are joined by a disulfide bond. Residues 118–139 (LIPAIQLTSVGVSVFTLTALSA) form a helical membrane-spanning segment. Topologically, residues 140-156 (DRYRAIVNPMDMQTSGV) are cytoplasmic. A helical membrane pass occupies residues 157-177 (VLWTSLKAVGIWVVSVLLAVP). Topologically, residues 178–211 (EAVFSEVARIGSSDNSSFTACIPYPQTDELHPKI) are extracellular. Asn192 carries N-linked (GlcNAc...) asparagine glycosylation. The helical transmembrane segment at 212-235 (HSVLIFLVYFLIPLVIISIYYYHI) threads the bilayer. Residues 236 to 266 (AKTLIRSAHNLPGEYNEHTKKQMETRKRLAK) lie on the Cytoplasmic side of the membrane. The helical transmembrane segment at 267 to 287 (IVLVFVGCFVFCWFPNHILYL) threads the bilayer. Residues 288 to 299 (YRSFNYKEIDPS) lie on the Extracellular side of the membrane. A helical membrane pass occupies residues 300–327 (LGHMIVTLVARVLSFSNSCVNPFALYLL). The Cytoplasmic segment spans residues 328 to 390 (SESFRKHFNS…GHSTKQEIAL (63 aa)). Cys341 carries the S-palmitoyl cysteine lipid modification. Phosphoserine is present on Ser352.

The protein belongs to the G-protein coupled receptor 1 family. As to expression, brain (olfactory bulb and central thalamic regions), and esophagus.

It localises to the cell membrane. In terms of biological role, receptor for neuromedin-B. Contributes to the maintenance of basal sigh rate through signaling in the pre-Botzinger complex, a cluster of several thousand neurons in the ventrolateral medulla responsible for inspiration during respiratory activity. Contributes to the induction of sneezing following exposure to chemical irritants or allergens which causes release of NMB by nasal sensory neurons and activation of NMBR-expressing neurons in the sneeze-evoking region of the brainstem. These in turn activate neurons of the caudal ventral respiratory group, giving rise to the sneezing response. Contributes to induction of acute itch, possibly through its activation on dorsal root ganglion neurons by the NMB peptide. Plays a role in the innate immune response to influenza A virus infection by enhancing interferon alpha expression and reducing expression of IL6. Plays a role in CSF1-induced proliferation of osteoclast precursors by contributing to the positive regulation of the expression of the CSF1 receptor CSF1R. This chain is Neuromedin-B receptor (Nmbr), found in Rattus norvegicus (Rat).